Consider the following 348-residue polypeptide: N-formyl peptide receptor 2 (348 aa).

Asn-1 carries N-linked (GlcNAc...) asparagine glycosylation. Residues 1–24 (NFSTPLNEYEEGSYESAGYTVLRI) are Extracellular-facing. A helical transmembrane segment spans residues 25-47 (LPLVVLGVTFVLGVLGNGLVIWV). Residues 48-58 (AGFRMTRTVTT) lie on the Cytoplasmic side of the membrane. A helical membrane pass occupies residues 59-80 (ICYLNLALADFSFTATLPFLIV). Residues 81–97 (SMAMGEKWPFGWFLCKL) are Extracellular-facing. Cys-95 and Cys-173 are joined by a disulfide. A helical transmembrane segment spans residues 98 to 118 (IHIVVDINLFGSVFLIGFIAL). Over 119 to 137 (DRCICVLHPVWAQNHRTVS) the chain is Cytoplasmic. Residues 138–159 (LAMKVIVGPWILALVLTLPVFL) form a helical membrane-spanning segment. Over 160-202 (FLTTVTIPNGDTYCTFNFASWGGTPEERLKVAITLLTARGIIR) the chain is Extracellular. A helical membrane pass occupies residues 203 to 223 (FVIGFSLPMSIVAICYGLIAA). Topologically, residues 224 to 239 (KIHKKGMIKSSRPLRV) are cytoplasmic. Residues 240–263 (LTAVVASFFICWFPFQLVALLGTV) form a helical membrane-spanning segment. Residues 264–283 (WLKEMLFYGKYKIIDILVNP) are Extracellular-facing. The chain crosses the membrane as a helical span at residues 284-303 (TSSLAFFNCCLNPMLYVFVG). Residues 304–348 (QDFRERLIHSLPTSLERALSEDSAPTNDTAANCASPPAETELQAM) are Cytoplasmic-facing. The segment at 322–348 (LSEDSAPTNDTAANCASPPAETELQAM) is disordered. Residues 326–335 (SAPTNDTAAN) are compositionally biased toward polar residues.

The protein belongs to the G-protein coupled receptor 1 family. As to quaternary structure, interacts with Amyloid-beta protein 42, product of APP; the interaction takes place at the cell surface and the complex is then rapidly internalized.

Its subcellular location is the cell membrane. Its function is as follows. Low affinity receptor for N-formyl-methionyl peptides, which are powerful neutrophil chemotactic factors. Binding of FMLP to the receptor causes activation of neutrophils. This response is mediated via a G-protein that activates a phosphatidylinositol-calcium second messenger system. Receptor for the chemokine-like protein FAM19A5, mediating FAM19A5-stimulated macrophage chemotaxis and the inhibitory effect on TNFSF11/RANKL-induced osteoclast differentiation. This chain is N-formyl peptide receptor 2 (FPR2), found in Pan troglodytes (Chimpanzee).